Consider the following 173-residue polypeptide: Bacterial deubiquitinase-like protein BilC (173 aa).

Residues H103, H105, and D115 each coordinate Zn(2+).

It belongs to the M67B family. The cofactor is Zn(2+).

In terms of biological role, component of the Bil (bacterial ISG15-like) antiviral defense system, composed of BilA, BilB, BilC and BilD. The Bil system specifically conjugates a ubiquitin-like moiety (bilA) to the bacteriophage central tail fiber (CTF, or tip attachment protein J) via reactions involving E1 (bilD) and E2 (bilB). Modifies CTF of phage SECphi27 and SECphi4, which probably interferes with assembly of the phage tail. Also modifies T5 baseplate hub protein pb3 (gene D16), but not gp27 of phage T6 (Bil defends against T6). BilC is a probable metalloprotease that may cleave non-specifically conjugated targets. Bil-encoding bacteria produce mostly defective phage SECphi27, many of which have phage assembly defects, including no tails. SECphi27 phage progeny produced in E.coli with the Bil system inject less DNA into naive host cells, maybe because the phage are less able to adsorb and inject their DNA into host cells. Expression of the Bil system in E.coli (strain MG1655) confers about 100-fold resistance to phage SECphi27, SECphi18, SECphi6, SECphi4 and T5, but not to SECphi17. When cells expressing the Bil system are infected by phage SECphi27 at low multiplicity of infection (0.03 MOI) the culture survives, at 3.0 MOI the culture collapses at the same time as cells without the Bil system. Its function is as follows. Cleaves a ubiquitin-GFP (Ubl-GFP) fusion protein in vivo. This chain is Bacterial deubiquitinase-like protein BilC, found in Collimonas sp. (strain OK412).